The primary structure comprises 508 residues: Chromosomal replication initiator protein DnaA (508 aa).

A domain I, interacts with DnaA modulators region spans residues 1 to 90; sequence MSVELWQQCV…RRSSAPRAAP (90 aa). Residues 91–171 are domain II; sequence NAPVSAAVAA…QVEGALKHTS (81 aa). The segment at 130–160 is disordered; it reads EVEEPSSRDSFDSMSDSGSVPAASGRTEQRT. Residues 172 to 388 are domain III, AAA+ region; it reads YLNRTFTFET…GALKRVIAHS (217 aa). ATP is bound by residues glycine 216, glycine 218, lysine 219, and threonine 220. The tract at residues 389–508 is domain IV, binds dsDNA; it reads HFMGRDITIE…YKNLLRTLTT (120 aa).

This sequence belongs to the DnaA family. In terms of assembly, oligomerizes as a right-handed, spiral filament on DNA at oriC.

It is found in the cytoplasm. In terms of biological role, plays an essential role in the initiation and regulation of chromosomal replication. ATP-DnaA binds to the origin of replication (oriC) to initiate formation of the DNA replication initiation complex once per cell cycle. Binds the DnaA box (a 9 base pair repeat at the origin) and separates the double-stranded (ds)DNA. Forms a right-handed helical filament on oriC DNA; dsDNA binds to the exterior of the filament while single-stranded (ss)DNA is stabiized in the filament's interior. The ATP-DnaA-oriC complex binds and stabilizes one strand of the AT-rich DNA unwinding element (DUE), permitting loading of DNA polymerase. After initiation quickly degrades to an ADP-DnaA complex that is not apt for DNA replication. Binds acidic phospholipids. The polypeptide is Chromosomal replication initiator protein DnaA (Pseudomonas entomophila (strain L48)).